Reading from the N-terminus, the 368-residue chain is G-protein coupled receptor 62 (368 aa).

Residues 1-18 (MANSTGLNASEVAGSLGL) are Extracellular-facing. Asparagine 3 and asparagine 8 each carry an N-linked (GlcNAc...) asparagine glycan. Residues 19–39 (ILAAVVEVGALLGNGALLVVV) traverse the membrane as a helical segment. The Cytoplasmic portion of the chain corresponds to 40-53 (LRTPGLRDALYLAH). Residues 54 to 74 (LCVVDLLAAASIMPLGLLAAP) traverse the membrane as a helical segment. Topologically, residues 75–91 (PPGLGRVRLGPAPCRAA) are extracellular. Residues 92 to 112 (RFLSAALLPACTLGVAALGLA) form a helical membrane-spanning segment. Topologically, residues 113–129 (RYRLIVHPLRPGSRPPP) are cytoplasmic. Residues 130 to 150 (VLVLTAVWAAAGLLGALSLLG) traverse the membrane as a helical segment. The Extracellular portion of the chain corresponds to 151–177 (TPPAPPPAPARCSVLAGGLGPFRPLWA). The chain crosses the membrane as a helical span at residues 178 to 198 (LLAFALPALLLLGAYGGIFVV). Residues 199–239 (ARRAALRPPRPARGSRLHSDSLDSRLSILPPLRPRLPGGKA) are Cytoplasmic-facing. Residues 240-260 (ALAPALAVGQFAACWLPYGCA) form a helical membrane-spanning segment. The Extracellular segment spans residues 261-272 (CLAPAARAAEAE). A helical membrane pass occupies residues 273–293 (AAVTWVAYSAFAAHPFLYGLL). At 294–368 (QRPVRLALGR…YQGPPESSLS (75 aa)) the chain is on the cytoplasmic side. Residues 332 to 368 (RPPEGPAVGPSEAPEQTPELAGGRSPAYQGPPESSLS) are disordered.

Belongs to the G-protein coupled receptor 1 family. Homodimers. Forms heterodimer with MTNR1B. Interacts with ARRB1 and ARRB2 in a spontaneous and agonist-independent manner; leading to the internalization of GPR62 in the endosomal compartment. In terms of tissue distribution, expressed in brain; detected in the basal forebrain, frontal cortex, caudate, putamen, thalamus and hippocampus.

It localises to the cell membrane. It is found in the endosome membrane. Orphan G-protein coupled receptor. Constitutively activates the G(q/11)/inositol phosphate and the G(s)-alpha/cAMP signaling pathways. Has spontaneous activity for beta-arrestin recruitment. Shows a reciprocal modulation of signaling functions with the melatonin receptor MTNR1B most likely through receptor heteromerization. In Homo sapiens (Human), this protein is G-protein coupled receptor 62 (GPR62).